The primary structure comprises 224 residues: Tumor protein D52 (224 aa).

Residues 29-53 (LSPSGNTSPPGSPTQNVGLLKTEPV) are disordered. Thr-35 carries the post-translational modification Phosphothreonine. Phosphoserine is present on residues Ser-36 and Ser-40. A coiled-coil region spans residues 61–113 (VTMLSAPEALTEEEQEELRRELTKVEEEIQTLSQVLAAKEKHLAELKRKLGIS). Phosphoserine is present on residues Thr-138, Ser-175, and Ser-223. The interval 186–224 (KVGGAKPAGGDFGEVLNSTANATSTMTTEPPPEQMTESP) is disordered. Over residues 202 to 224 (NSTANATSTMTTEPPPEQMTESP) the composition is skewed to low complexity.

The protein belongs to the TPD52 family. In terms of assembly, forms a homodimer or heterodimer with other members of the family. Isoform 2 is expressed at higher levels in kidney and brain than in liver, lung, testis and heart. Within the brain, isoform 2 is highly expressed in the granular layer of the cerebellum, the cortex and the hippocampus. In embryos, isoform 2 is expressed in the epithelium of the developing intestine, stomach, olfactory epithelium, neuronal layers of the retina, salivary gland, kidney and dorsal root ganglion.

This chain is Tumor protein D52 (Tpd52), found in Mus musculus (Mouse).